A 146-amino-acid polypeptide reads, in one-letter code: [Ribosomal protein bS18]-alanine N-acetyltransferase (146 aa).

Residues 2–146 form the N-acetyltransferase domain; sequence SIISQIEACD…ENAVVMACYL (145 aa). Residue 69–71 coordinates acetyl-CoA; the sequence is IAI. Glu-103 (proton acceptor) is an active-site residue. Asn-108 contributes to the acetyl-CoA binding site. Tyr-114 acts as the Proton donor in catalysis.

It belongs to the acetyltransferase family. RimI subfamily.

The protein resides in the cytoplasm. It catalyses the reaction N-terminal L-alanyl-[ribosomal protein bS18] + acetyl-CoA = N-terminal N(alpha)-acetyl-L-alanyl-[ribosomal protein bS18] + CoA + H(+). In terms of biological role, acetylates the N-terminal alanine of ribosomal protein bS18. The chain is [Ribosomal protein bS18]-alanine N-acetyltransferase from Haemophilus influenzae (strain ATCC 51907 / DSM 11121 / KW20 / Rd).